The sequence spans 492 residues: ATP synthase subunit beta, plastid (492 aa).

170-177 is an ATP binding site; it reads GGAGVGKT.

This sequence belongs to the ATPase alpha/beta chains family. As to quaternary structure, F-type ATPases have 2 components, CF(1) - the catalytic core - and CF(0) - the membrane proton channel. CF(1) has five subunits: alpha(3), beta(3), gamma(1), delta(1), epsilon(1). CF(0) has four main subunits: a(1), b(1), b'(1) and c(9-12).

Its subcellular location is the plastid membrane. It carries out the reaction ATP + H2O + 4 H(+)(in) = ADP + phosphate + 5 H(+)(out). Its function is as follows. Produces ATP from ADP in the presence of a proton gradient across the membrane. The catalytic sites are hosted primarily by the beta subunits. This chain is ATP synthase subunit beta, plastid, found in Aneura mirabilis (Parasitic liverwort).